Consider the following 510-residue polypeptide: Probable cytosol aminopeptidase (510 aa).

Mn(2+)-binding residues include Lys282 and Asp287. Residue Lys294 is part of the active site. Positions 305, 364, and 366 each coordinate Mn(2+). Residue Arg368 is part of the active site.

Belongs to the peptidase M17 family. It depends on Mn(2+) as a cofactor.

It localises to the cytoplasm. It catalyses the reaction Release of an N-terminal amino acid, Xaa-|-Yaa-, in which Xaa is preferably Leu, but may be other amino acids including Pro although not Arg or Lys, and Yaa may be Pro. Amino acid amides and methyl esters are also readily hydrolyzed, but rates on arylamides are exceedingly low.. It carries out the reaction Release of an N-terminal amino acid, preferentially leucine, but not glutamic or aspartic acids.. Functionally, presumably involved in the processing and regular turnover of intracellular proteins. Catalyzes the removal of unsubstituted N-terminal amino acids from various peptides. The polypeptide is Probable cytosol aminopeptidase (Cupriavidus metallidurans (strain ATCC 43123 / DSM 2839 / NBRC 102507 / CH34) (Ralstonia metallidurans)).